Here is a 404-residue protein sequence, read N- to C-terminus: MMDWATLPKDLLDLISKCLESSFDLIQFRSVCSSWRSAAGPKRLLWAHNLPFFPSDDKPFLSNVILRVAHQSILLIKPNEPQCEADLFGWIVKVWDNIYVSRKMTLLKPLSSSRNYFPQHLPRIFDMSKFTVRELCREVKLYHPDYYCVPGHTALELELGKTVVKYLNDDKFVLLTILEYGKLAVFRSWDREWTVINDYIPSRCQDLIMFDGRFFAIDYNGRTVVVDYSSFKLTLAANPLIGGGDKKFLIESCGEMFLVDIEFCLNEKPEFTGGFYSYFNETTVSYKFKFFKLVEREKRWVEVEDLGDKMFFLGDDSTFSASTADIIPRCVGTGSFVFFYTHEESLVVMDDRNLGVFDFRSGKTELVNKLPEYAKLFWPPPPWITTSHESVENYTGETSSQSQS.

Positions 2-50 constitute an F-box domain; it reads MDWATLPKDLLDLISKCLESSFDLIQFRSVCSSWRSAAGPKRLLWAHNL.

The protein is F-box protein At2g17036 of Arabidopsis thaliana (Mouse-ear cress).